A 56-amino-acid polypeptide reads, in one-letter code: Large ribosomal subunit protein bL32 (56 aa).

Residues 1–56 are disordered; the sequence is MAVPARRTSKAKKNKRRTHKGLTTPGLSRDSETGEYRMSHRISPDGTYKGRTIIEK. Over residues 7–20 the composition is skewed to basic residues; the sequence is RTSKAKKNKRRTHK. Over residues 29–38 the composition is skewed to basic and acidic residues; it reads RDSETGEYRM.

It belongs to the bacterial ribosomal protein bL32 family.

This chain is Large ribosomal subunit protein bL32, found in Listeria monocytogenes serotype 4a (strain HCC23).